The primary structure comprises 319 residues: Serine/threonine-protein phosphatase PP1 isozyme 2 (319 aa).

Residues aspartate 61, histidine 63, aspartate 89, and asparagine 121 each contribute to the Mn(2+) site. Histidine 122 (proton donor) is an active-site residue. Histidine 170 and histidine 245 together coordinate Mn(2+).

This sequence belongs to the PPP phosphatase family. PP-1 subfamily. Requires Mn(2+) as cofactor.

The enzyme catalyses O-phospho-L-seryl-[protein] + H2O = L-seryl-[protein] + phosphate. It catalyses the reaction O-phospho-L-threonyl-[protein] + H2O = L-threonyl-[protein] + phosphate. The sequence is that of Serine/threonine-protein phosphatase PP1 isozyme 2 from Acetabularia peniculus (Green alga).